Reading from the N-terminus, the 287-residue chain is MKSRLFIISQYLLPHHLLSRLAGCVAECRARWFKNAFTAWFAKRYQVNMNEALVEDLTAYEHFNAFFTRALKPDARPLDETPGAILCPADGAVSQLGPIEHGRIFQAKGHSFSALELLGGDPALAAPFMGGEFATIYLSPKDYHRVHMPLAGTLREMVYVPGRLFSVNQTTAENVPELFARNERVVCLFDTERGPMAVVLVGAMIVASIETVWAGLVTPPKRELKTFRYDEGSRAPIHLEKGAELGRFKLGSTAIVLFGPEQVKWAETLGAGSATRMGELLAVPVQA.

Active-site charge relay system; for autoendoproteolytic cleavage activity residues include Asp-90, His-147, and Ser-252. Ser-252 functions as the Schiff-base intermediate with substrate; via pyruvic acid; for decarboxylase activity in the catalytic mechanism. Residue Ser-252 is modified to Pyruvic acid (Ser); by autocatalysis.

Belongs to the phosphatidylserine decarboxylase family. PSD-B subfamily. Prokaryotic type I sub-subfamily. Heterodimer of a large membrane-associated beta subunit and a small pyruvoyl-containing alpha subunit. Pyruvate is required as a cofactor. Post-translationally, is synthesized initially as an inactive proenzyme. Formation of the active enzyme involves a self-maturation process in which the active site pyruvoyl group is generated from an internal serine residue via an autocatalytic post-translational modification. Two non-identical subunits are generated from the proenzyme in this reaction, and the pyruvate is formed at the N-terminus of the alpha chain, which is derived from the carboxyl end of the proenzyme. The autoendoproteolytic cleavage occurs by a canonical serine protease mechanism, in which the side chain hydroxyl group of the serine supplies its oxygen atom to form the C-terminus of the beta chain, while the remainder of the serine residue undergoes an oxidative deamination to produce ammonia and the pyruvoyl prosthetic group on the alpha chain. During this reaction, the Ser that is part of the protease active site of the proenzyme becomes the pyruvoyl prosthetic group, which constitutes an essential element of the active site of the mature decarboxylase.

The protein resides in the cell membrane. It carries out the reaction a 1,2-diacyl-sn-glycero-3-phospho-L-serine + H(+) = a 1,2-diacyl-sn-glycero-3-phosphoethanolamine + CO2. The protein operates within phospholipid metabolism; phosphatidylethanolamine biosynthesis; phosphatidylethanolamine from CDP-diacylglycerol: step 2/2. In terms of biological role, catalyzes the formation of phosphatidylethanolamine (PtdEtn) from phosphatidylserine (PtdSer). The polypeptide is Phosphatidylserine decarboxylase proenzyme (Pseudomonas putida (strain W619)).